A 122-amino-acid polypeptide reads, in one-letter code: Large ribosomal subunit protein uL14 (122 aa).

This sequence belongs to the universal ribosomal protein uL14 family. Part of the 50S ribosomal subunit. Forms a cluster with proteins L3 and L19. In the 70S ribosome, L14 and L19 interact and together make contacts with the 16S rRNA in bridges B5 and B8.

Functionally, binds to 23S rRNA. Forms part of two intersubunit bridges in the 70S ribosome. The protein is Large ribosomal subunit protein uL14 of Symbiobacterium thermophilum (strain DSM 24528 / JCM 14929 / IAM 14863 / T).